We begin with the raw amino-acid sequence, 604 residues long: Elongation factor 4 (604 aa).

A tr-type G domain is found at 7 to 189; that stretch reads SKIRNFCIIA…SIVHLVPPPS (183 aa). GTP-binding positions include 19–24 and 136–139; these read DHGKST and NKID.

This sequence belongs to the TRAFAC class translation factor GTPase superfamily. Classic translation factor GTPase family. LepA subfamily.

It is found in the cell inner membrane. It carries out the reaction GTP + H2O = GDP + phosphate + H(+). Required for accurate and efficient protein synthesis under certain stress conditions. May act as a fidelity factor of the translation reaction, by catalyzing a one-codon backward translocation of tRNAs on improperly translocated ribosomes. Back-translocation proceeds from a post-translocation (POST) complex to a pre-translocation (PRE) complex, thus giving elongation factor G a second chance to translocate the tRNAs correctly. Binds to ribosomes in a GTP-dependent manner. This Synechococcus sp. (strain ATCC 27144 / PCC 6301 / SAUG 1402/1) (Anacystis nidulans) protein is Elongation factor 4.